Consider the following 490-residue polypeptide: ATP synthase subunit beta, chloroplastic (490 aa).

170–177 contacts ATP; the sequence is GGAGVGKT.

Belongs to the ATPase alpha/beta chains family. F-type ATPases have 2 components, CF(1) - the catalytic core - and CF(0) - the membrane proton channel. CF(1) has five subunits: alpha(3), beta(3), gamma(1), delta(1), epsilon(1). CF(0) has four main subunits: a(1), b(1), b'(1) and c(9-12).

Its subcellular location is the plastid. It localises to the chloroplast thylakoid membrane. It catalyses the reaction ATP + H2O + 4 H(+)(in) = ADP + phosphate + 5 H(+)(out). Its function is as follows. Produces ATP from ADP in the presence of a proton gradient across the membrane. The catalytic sites are hosted primarily by the beta subunits. The chain is ATP synthase subunit beta, chloroplastic from Ipomoea quamoclit (Cypress vine).